A 426-amino-acid polypeptide reads, in one-letter code: Tyrosine--tRNA ligase (426 aa).

Residue Y35 participates in L-tyrosine binding. Positions 40 to 49 match the 'HIGH' region motif; sequence PTAPSLHIGH. L-tyrosine contacts are provided by Y174 and Q178. Positions 234-238 match the 'KMSKS' region motif; the sequence is KFGKT. An ATP-binding site is contributed by K237. Residues 358–418 enclose the S4 RNA-binding domain; the sequence is PRVVDALVAT…WAVIRRGRRA (61 aa).

It belongs to the class-I aminoacyl-tRNA synthetase family. TyrS type 1 subfamily. As to quaternary structure, homodimer.

The protein localises to the cytoplasm. It carries out the reaction tRNA(Tyr) + L-tyrosine + ATP = L-tyrosyl-tRNA(Tyr) + AMP + diphosphate + H(+). Catalyzes the attachment of tyrosine to tRNA(Tyr) in a two-step reaction: tyrosine is first activated by ATP to form Tyr-AMP and then transferred to the acceptor end of tRNA(Tyr). The polypeptide is Tyrosine--tRNA ligase (Acidothermus cellulolyticus (strain ATCC 43068 / DSM 8971 / 11B)).